The following is a 483-amino-acid chain: Matrix metalloproteinase-20 (483 aa).

A signal peptide spans 1–22 (MKVLPASGLAVFLIMALKFSTA). Positions 23 to 107 (APSLVAASPR…PRCGVPDVAN (85 aa)) are excised as a propeptide. Residues 98–105 (PRCGVPDV) carry the Cysteine switch motif. Position 100 (Cys-100) interacts with Zn(2+). 3 residues coordinate Ca(2+): Glu-164, Ala-165, and Asp-166. Zn(2+)-binding residues include His-176 and Asp-178. The Ca(2+) site is built by Asp-183, Gly-184, Arg-186, and Thr-188. A Zn(2+)-binding site is contributed by His-191. Ca(2+) contacts are provided by Glu-197, Gly-198, Gly-200, and Asp-202. Residue His-204 coordinates Zn(2+). The Ca(2+) site is built by Asp-206 and Glu-209. His-226 contributes to the Zn(2+) binding site. The active site involves Glu-227. The Zn(2+) site is built by His-230 and His-236. Hemopexin repeat units lie at residues 293 to 343 (PDLC…FPQL), 344 to 389 (MSNV…GFPR), 391 to 439 (VQQI…FSGV), and 440 to 483 (NGQI…WIGC). Residues Cys-296 and Cys-483 are joined by a disulfide bond.

The protein belongs to the peptidase M10A family. Zn(2+) is required as a cofactor. It depends on Ca(2+) as a cofactor. Post-translationally, autoactivates at least at the 107-Asn-|-Tyr-108 site. As to expression, expressed specifically in the enamel organ.

Its subcellular location is the secreted. The protein resides in the extracellular space. It is found in the extracellular matrix. In terms of biological role, degrades amelogenin, the major protein component of the enamel matrix and two of the macromolecules characterizing the cartilage extracellular matrix: aggrecan and the cartilage oligomeric matrix protein (COMP). May play a central role in tooth enamel formation. Cleaves aggrecan at the '360-Asn-|-Phe-361' site. The protein is Matrix metalloproteinase-20 (MMP20) of Homo sapiens (Human).